Consider the following 814-residue polypeptide: ATP-dependent RNA helicase dbp-7 (814 aa).

A disordered region spans residues 26–102; that stretch reads GGRWRDRVKA…PPPPPTHAMK (77 aa). 2 stretches are compositionally biased toward basic and acidic residues: residues 28 to 42 and 69 to 78; these read RWRDRVKAQKGEKGG and QRTEDGDSGR. Residues 145–174 carry the Q motif motif; that stretch reads ENFLSLGLSRRVSQHLATKLEMKAPTAIQK. The Helicase ATP-binding domain occupies 178 to 384; the sequence is PQLVKEDSDA…EISLEDAVHI (207 aa). Residue 191-198 coordinates ATP; the sequence is AETGSGKT. The DEAD box motif lies at 313–316; the sequence is DEGD. Residues 422 to 622 enclose the Helicase C-terminal domain; sequence RLVTLIALLK…GFATNINVPG (201 aa). 3 disordered regions span residues 464–483, 662–695, and 741–795; these read TPRAEPEPKPEGEAPTKPNI, ESKSEKFAASKQGKKGKKDAKKDENKTPDNPLLV, and GIGG…AGRR. Positions 467–477 are enriched in basic and acidic residues; that stretch reads AEPEPKPEGEA. Over residues 779-790 the composition is skewed to acidic residues; it reads DDDERDFGAADE.

It belongs to the DEAD box helicase family. DDX31/DBP7 subfamily.

It is found in the nucleus. The protein resides in the nucleolus. It carries out the reaction ATP + H2O = ADP + phosphate + H(+). In terms of biological role, ATP-binding RNA helicase involved in the biogenesis of 60S ribosomal subunits and is required for the normal formation of 25S and 5.8S rRNAs. The chain is ATP-dependent RNA helicase dbp-7 (dbp-7) from Neurospora crassa (strain ATCC 24698 / 74-OR23-1A / CBS 708.71 / DSM 1257 / FGSC 987).